A 228-amino-acid chain; its full sequence is Secreted LysM effector ECP6 (228 aa).

The signal sequence occupies residues 1–18 (MQSMILFAAALMGAAVNG). 4 cysteine pairs are disulfide-bonded: Cys-36-Cys-90, Cys-64-Cys-98, Cys-109-Cys-163, and Cys-168-Cys-220. One can recognise a LysM 1 domain in the interval 42 to 86 (IKYTVVKGDTLTSIAKKFKSGICNIVSVNKLANPNLIELGATLII). Residues Thr-51, Thr-53, Asn-76, and Ile-78 each coordinate chitin. N-linked (GlcNAc...) asparagine glycosylation is found at Asn-89, Asn-95, Asn-127, and Asn-133. LysM domains follow at residues 115-160 (GSYT…IITV) and 172-216 (GTYN…QIIL). Chitin contacts are provided by Gly-179, Leu-181, Val-183, Pro-205, Ser-206, and Leu-208. The N-linked (GlcNAc...) asparagine glycan is linked to Asn-222.

It belongs to the secreted LysM effector family. Forms homodimers.

It localises to the secreted. Functionally, secreted effector that enables the plant pathogenic fungus to manipulate host defenses for successful infection. Binds chitine, but not to any other glycan, including the N-linked glycan chitobiose. Outcompetes host immune receptor for chitin binding through intrachain LysM dimerization. During infection, sequesters chitin oligosaccharides that are released from the cell walls of invading hyphae to prevent elicitation of host immunity. The polypeptide is Secreted LysM effector ECP6 (Passalora fulva (Tomato leaf mold)).